The following is a 342-amino-acid chain: Epoxide hydrolase srdG (342 aa).

In terms of domain architecture, AB hydrolase-1 spans 44-332 (ATVLLLHGWP…LIHTPEEVNK (289 aa)). Asp122 (nucleophile) is an active-site residue. Residue His320 is the Proton acceptor of the active site.

Belongs to the AB hydrolase superfamily. Epoxide hydrolase family.

Functionally, highly reducing polyketide synthase; part of the gene cluster that mediates the biosynthesis of sordarial, a salicylic aldehyde structurally related to the phytotoxin pyriculol. The most interesting aspect of this pathway is formation of an aromatic product from the highly reducing polyketide synthase srdA. SrdA synthesizes a reduced polyketide chain from one molecule of acetyl-CoA and five molecules of malonyl-CoA. The polyketide chain is then reductively released as an aldehyde. The oxidoreductases srdC, srdD and srdE then oxidize one of the hydroxy groups to facilitate the intramolecular aldol condensation, followed by dehydration to yield a salicylic aldehyde. This aldehyde can undergo facile reduction by endogenous reductases to yield the alcohol 1-hydroxy-2-hydroxymethyl-3-pent-1,3-dienylbenzene. The flavin-dependent srdI counteract against the propensity of the aldehydes to be reduced under physiological conditions and is responsible for reoxidizing 1-hydroxy-2-hydroxymethyl-3-pent-1,3-dienylbenzene back to the salicylic aldehyde. This salicylic aldehyde is then selectively epoxidized by the cupin-domain-containing oxidoreductase srdB to yield the epoxide, which can be hydrolyzed stereoselectively by the hydrolase srdG to give the final product sordarial. The polypeptide is Epoxide hydrolase srdG (Neurospora crassa (strain ATCC 24698 / 74-OR23-1A / CBS 708.71 / DSM 1257 / FGSC 987)).